We begin with the raw amino-acid sequence, 56 residues long: MAVQQNKSTRSKRGMRRSHNALPITQISVDKVSKEIHRRHYITMNGFYRGVKMIEK.

The disordered stretch occupies residues Met1–Pro23. Residues Thr9–His19 are compositionally biased toward basic residues.

Belongs to the bacterial ribosomal protein bL32 family.

The chain is Large ribosomal subunit protein bL32 from Blochmanniella floridana.